Consider the following 206-residue polypeptide: Large ribosomal subunit protein uL4 (206 aa).

A disordered region spans residues 45-76; it reads RQGTQSAKTRTEVSGGGIKPWRQKGTGRARQG.

Belongs to the universal ribosomal protein uL4 family. As to quaternary structure, part of the 50S ribosomal subunit.

Its function is as follows. One of the primary rRNA binding proteins, this protein initially binds near the 5'-end of the 23S rRNA. It is important during the early stages of 50S assembly. It makes multiple contacts with different domains of the 23S rRNA in the assembled 50S subunit and ribosome. In terms of biological role, forms part of the polypeptide exit tunnel. The sequence is that of Large ribosomal subunit protein uL4 from Clostridium acetobutylicum (strain ATCC 824 / DSM 792 / JCM 1419 / IAM 19013 / LMG 5710 / NBRC 13948 / NRRL B-527 / VKM B-1787 / 2291 / W).